The following is a 222-amino-acid chain: Putative O-methyltransferase MAP_2558 (222 aa).

S-adenosyl-L-methionine contacts are provided by residues Val49, Glu71, 73-74 (GT), Ser79, Asp97, and Ile98. Asp145 is a binding site for substrate. Asp147 is a binding site for S-adenosyl-L-methionine.

Belongs to the class I-like SAM-binding methyltransferase superfamily. Cation-dependent O-methyltransferase family.

This Mycolicibacterium paratuberculosis (strain ATCC BAA-968 / K-10) (Mycobacterium paratuberculosis) protein is Putative O-methyltransferase MAP_2558.